Consider the following 134-residue polypeptide: Large ribosomal subunit protein bL20 (134 aa).

Belongs to the bacterial ribosomal protein bL20 family.

Its function is as follows. Binds directly to 23S ribosomal RNA and is necessary for the in vitro assembly process of the 50S ribosomal subunit. It is not involved in the protein synthesizing functions of that subunit. This chain is Large ribosomal subunit protein bL20, found in Sinorhizobium fredii (strain NBRC 101917 / NGR234).